The chain runs to 103 residues: Small ribosomal subunit protein uS14c (103 aa).

This sequence belongs to the universal ribosomal protein uS14 family. In terms of assembly, part of the 30S ribosomal subunit.

Its subcellular location is the plastid. It localises to the chloroplast. In terms of biological role, binds 16S rRNA, required for the assembly of 30S particles. The polypeptide is Small ribosomal subunit protein uS14c (Oryza nivara (Indian wild rice)).